The following is a 394-amino-acid chain: Choline/ethanolamine kinase (394 aa).

The segment at 1 to 42 is disordered; that stretch reads MAADGTGVVGGGAVGGGLPKDGLQDAKCPEPIPNRRRASSLS. Alanine 2 bears the N-acetylalanine mark. Residues 7–19 are compositionally biased toward gly residues; the sequence is GVVGGGAVGGGLP. Residues 75-81, arginine 104, 146-152, glutamine 244, and aspartate 264 each bind ATP; these read SGGLSNL and QYLPSRP. 77–79 provides a ligand contact to substrate; it reads GLS.

This sequence belongs to the choline/ethanolamine kinase family. In terms of assembly, homodimer, and heterodimer with CHKA. As to expression, expressed ubiquitously with the highest level in testis.

The enzyme catalyses choline + ATP = phosphocholine + ADP + H(+). The catalysed reaction is ethanolamine + ATP = phosphoethanolamine + ADP + H(+). It functions in the pathway phospholipid metabolism; phosphatidylethanolamine biosynthesis; phosphatidylethanolamine from ethanolamine: step 1/3. In terms of biological role, has a key role in phospholipid metabolism, and catalyzes the first step of phosphatidylethanolamine and phosphatidylcholine biosynthesis. The polypeptide is Choline/ethanolamine kinase (Chkb) (Mus musculus (Mouse)).